The following is a 1040-amino-acid chain: ATPase family AAA domain-containing protein 2 (1040 aa).

The segment covering 1-11 (MSLLKMRRHAI) has biased composition (basic residues). The interval 1–30 (MSLLKMRRHAIHSSDSTSSSSSEDDCFERR) is disordered. Ser-65 is modified (phosphoserine). ATP is bound at residue 122 to 129 (GPPGTGKT). Ser-401 and Ser-406 each carry phosphoserine. Coiled-coil stretches lie at residues 619–643 (LTAE…IFLR) and 735–761 (YAII…KKRG). Residues 629 to 741 (EQEEDTFREL…DTAYAIIKEE (113 aa)) enclose the Bromo domain. Positions 772-799 (YHVMPKQNSPPVGDKKPDQEQNEKLKVP) are disordered. Glycyl lysine isopeptide (Lys-Gly) (interchain with G-Cter in SUMO2) cross-links involve residues Lys-777 and Lys-797. Positions 784–797 (GDKKPDQEQNEKLK) are enriched in basic and acidic residues. Phosphothreonine occurs at positions 801 and 825. Residues 811–833 (LKRKFHKKSKWHVGTKIKRRKIS) show a composition bias toward basic residues. Residues 811 to 935 (LKRKFHKKSK…SQVTDIPEDS (125 aa)) are disordered. The segment covering 835 to 848 (AKDNSLNAMNSSSR) has biased composition (polar residues). 3 positions are modified to phosphoserine: Ser-849, Ser-883, and Ser-891. 2 stretches are compositionally biased toward basic and acidic residues: residues 849–863 (SDTE…EHTE) and 874–885 (ESDKQNRLESNI). Over residues 901-919 (EEPKETTEGTELRKDRIVC) the composition is skewed to basic and acidic residues. Ser-951 is modified (phosphoserine). Residue Thr-972 is modified to Phosphothreonine.

It belongs to the AAA ATPase family. As to quaternary structure, interacts with ESR1 and NCOA3 and these interactions are enhanced by estradiol. Interacts with acetylated lysine residues on histone H1.4, H2A, H2B and H3 (in vitro).

Its subcellular location is the nucleus. It catalyses the reaction ATP + H2O = ADP + phosphate + H(+). May be a transcriptional coactivator of the nuclear receptor ESR1 required to induce the expression of a subset of estradiol target genes, such as CCND1, MYC and E2F1. May play a role in the recruitment or occupancy of CREBBP at some ESR1 target gene promoters. May be required for histone hyperacetylation. The sequence is that of ATPase family AAA domain-containing protein 2 (Atad2) from Mus musculus (Mouse).